The primary structure comprises 106 residues: 3-phenylpropionate/cinnamic acid dioxygenase ferredoxin subunit (106 aa).

Residues 4–99 (IYACPVADVP…VHVEGSDIFI (96 aa)) enclose the Rieske domain. [2Fe-2S] cluster-binding residues include cysteine 42, histidine 44, cysteine 62, and histidine 65.

The protein belongs to the bacterial ring-hydroxylating dioxygenase ferredoxin component family. As to quaternary structure, this dioxygenase system consists of four proteins: the two subunits of the hydroxylase component (HcaE and HcaF), a ferredoxin (HcaC) and a ferredoxin reductase (HcaD). Requires [2Fe-2S] cluster as cofactor.

The protein operates within aromatic compound metabolism; 3-phenylpropanoate degradation. Its function is as follows. Part of the multicomponent 3-phenylpropionate dioxygenase, that converts 3-phenylpropionic acid (PP) and cinnamic acid (CI) into 3-phenylpropionate-dihydrodiol (PP-dihydrodiol) and cinnamic acid-dihydrodiol (CI-dihydrodiol), respectively. This protein seems to be a 2Fe-2S ferredoxin. The sequence is that of 3-phenylpropionate/cinnamic acid dioxygenase ferredoxin subunit from Shigella boydii serotype 4 (strain Sb227).